The chain runs to 518 residues: Membrane-bound lytic murein transglycosylase F (518 aa).

The N-terminal stretch at methionine 1–alanine 21 is a signal peptide. Residues leucine 22–glycine 269 are non-LT domain. An LT domain region spans residues aspartate 270 to asparagine 518. Glutamate 314 is a catalytic residue.

The protein in the N-terminal section; belongs to the bacterial solute-binding protein 3 family. It in the C-terminal section; belongs to the transglycosylase Slt family.

The protein localises to the cell outer membrane. The enzyme catalyses Exolytic cleavage of the (1-&gt;4)-beta-glycosidic linkage between N-acetylmuramic acid (MurNAc) and N-acetylglucosamine (GlcNAc) residues in peptidoglycan, from either the reducing or the non-reducing ends of the peptidoglycan chains, with concomitant formation of a 1,6-anhydrobond in the MurNAc residue.. In terms of biological role, murein-degrading enzyme that degrades murein glycan strands and insoluble, high-molecular weight murein sacculi, with the concomitant formation of a 1,6-anhydromuramoyl product. Lytic transglycosylases (LTs) play an integral role in the metabolism of the peptidoglycan (PG) sacculus. Their lytic action creates space within the PG sacculus to allow for its expansion as well as for the insertion of various structures such as secretion systems and flagella. This is Membrane-bound lytic murein transglycosylase F from Escherichia coli O6:K15:H31 (strain 536 / UPEC).